Consider the following 1034-residue polypeptide: AP-3 complex subunit delta (1034 aa).

HEAT repeat units lie at residues 35-72, 143-180, 181-217, 219-255, 258-297, 299-337, 338-374, 376-414, 415-452, and 570-609; these read KYISTCIEEIKQELRQDNISVKCNAVAKLTYIQMLGYD, DLSRDLANDIMTLMSSTKPYLRMKAVLMMYKVFLRYPE, ALRPAFPKLKEKLEDPDPGVQSAAVNVICELARKNPK, YLPLAPIFFKLMTTSTNNWMLIKIIKLFGALTPLEPR, KKLIEPLTNLIHSTSAMSLLYECINTVIAVLISISSGMPN, SASIQLCVQKLRILIEDSDQNLKYLGLLAMSKILKTHPK, SVQAHKDLILACLDDKDESIRLRALDLLYGMVSKKNL, EIVKRLLGHMERAEGSAYRDELLYKVIEICAQSSYLYVT, NFEWYLTVLVELIQLEAGSRHGRLIAEQLLDVAIRVPV, and NSACMLIEMLRNQLSTSTDAMAMDTTTEGGIPPLAIEIVQ. 4 disordered regions span residues 637-660, 669-688, 701-723, and 758-1034; these read DLDEWINAPPPEDAASSSSSEHDK, QAGTGADGGEKRRQSLELTP, EQSNNPHYLKSTPTASGASNADQ, and QEQQ…KEIL. Serine 683 is modified (phosphoserine). Threonine 687 is modified (phosphothreonine). Over residues 769–784 the composition is skewed to basic residues; that stretch reads GKKKHKKGKKSKKAKN. Composition is skewed to basic and acidic residues over residues 822–836 and 882–906; these read KDGKYDPNDPHRALD and KDKDKDKERKVKREHRESKRERKEA. Over residues 928–942 the composition is skewed to low complexity; the sequence is SATSNNNNTSTVLPD. Basic residues predominate over residues 986–1003; the sequence is KVHKKKHKKEKSQRKEKK. The segment covering 1007 to 1016 has biased composition (low complexity); that stretch reads ESASVSAIVS. Residues 1025–1034 are compositionally biased toward polar residues; the sequence is GISTPSKEIL.

The protein belongs to the adaptor complexes large subunit family. As to quaternary structure, adaptor protein complex 3 (AP-3) is a heterotetramer composed of two large chains (delta and beta3), a medium chain (mu3) and a small chain (sigma3).

The protein resides in the cytoplasmic vesicle. The protein localises to the clathrin-coated vesicle membrane. It localises to the golgi apparatus. Part of the AP-3 complex, an adapter-related complex which is not clathrin-associated. The complex is associated with the Golgi region as well as more peripheral structures. It facilitates the budding of vesicles from the Golgi membrane and may be directly involved in trafficking to lysosomes. In terms of biological role, may be a coat protein involved in the formation of specialized structures like pigment granules. In Drosophila melanogaster (Fruit fly), this protein is AP-3 complex subunit delta (g).